Here is a 592-residue protein sequence, read N- to C-terminus: Aspartate--tRNA(Asp/Asn) ligase (592 aa).

Position 176 (Glu176) interacts with L-aspartate. The segment at 200-203 is aspartate; the sequence is QIFK. Residue Arg222 coordinates L-aspartate. Residues 222 to 224 and Gln231 each bind ATP; that span reads RDE. Position 450 (His450) interacts with L-aspartate. An ATP-binding site is contributed by Glu484. Arg491 contributes to the L-aspartate binding site. 536 to 539 lines the ATP pocket; sequence GLDR.

This sequence belongs to the class-II aminoacyl-tRNA synthetase family. Type 1 subfamily. Homodimer.

It localises to the cytoplasm. It carries out the reaction tRNA(Asx) + L-aspartate + ATP = L-aspartyl-tRNA(Asx) + AMP + diphosphate. In terms of biological role, aspartyl-tRNA synthetase with relaxed tRNA specificity since it is able to aspartylate not only its cognate tRNA(Asp) but also tRNA(Asn). Reaction proceeds in two steps: L-aspartate is first activated by ATP to form Asp-AMP and then transferred to the acceptor end of tRNA(Asp/Asn). The chain is Aspartate--tRNA(Asp/Asn) ligase from Anoxybacillus flavithermus (strain DSM 21510 / WK1).